The primary structure comprises 376 residues: Lipoprotein p33 (376 aa).

An N-terminal signal peptide occupies residues 1 to 30 (MKIKKIKLLKALALTGAFGIVATVPVIVYS). Cys-31 carries the N-palmitoyl cysteine lipid modification. Cys-31 is lipidated: S-diacylglycerol cysteine. The tract at residues 35 to 59 (DNNGGTGDNNTGGGGSGTDQQQGTT) is disordered. Over residues 38–51 (GGTGDNNTGGGGSG) the composition is skewed to gly residues.

This sequence belongs to the p35 lipoprotein family.

It is found in the cell membrane. In Malacoplasma penetrans (Mycoplasma penetrans), this protein is Lipoprotein p33.